A 119-amino-acid chain; its full sequence is Ribonuclease P protein component (119 aa).

This sequence belongs to the RnpA family. As to quaternary structure, consists of a catalytic RNA component (M1 or rnpB) and a protein subunit.

It catalyses the reaction Endonucleolytic cleavage of RNA, removing 5'-extranucleotides from tRNA precursor.. Its function is as follows. RNaseP catalyzes the removal of the 5'-leader sequence from pre-tRNA to produce the mature 5'-terminus. It can also cleave other RNA substrates such as 4.5S RNA. The protein component plays an auxiliary but essential role in vivo by binding to the 5'-leader sequence and broadening the substrate specificity of the ribozyme. The chain is Ribonuclease P protein component from Histophilus somni (strain 129Pt) (Haemophilus somnus).